The chain runs to 269 residues: Troponin T, fast skeletal muscle (269 aa).

Residues 1–23 are compositionally biased toward acidic residues; that stretch reads MSDEEVEQVEEQYEEEEEAQEEA. The tract at residues 1–72 is disordered; that stretch reads MSDEEVEQVE…EKVDFDDIQK (72 aa). The residue at position 2 (Ser-2) is an N-acetylserine. At Ser-2 the chain carries Phosphoserine. Residues 24–34 are compositionally biased toward basic and acidic residues; it reads AEVHEEVHEPE. A compositionally biased stretch (acidic residues) spans 35 to 47; it reads EVQEDTAEEDAEE. The span at 60 to 72 shows a compositional bias: basic and acidic residues; it reads PEGEKVDFDDIQK. At Ser-88 the chain carries Phosphoserine. Basic and acidic residues predominate over residues 111 to 153; the sequence is RAERAEQQRIRAEKERERQNRLAEEKARREEEDAKRRAEDDLK. A disordered region spans residues 111–158; the sequence is RAERAEQQRIRAEKERERQNRLAEEKARREEEDAKRRAEDDLKKKKAL. Ser-159, Ser-166, and Ser-167 each carry phosphoserine. The disordered stretch occupies residues 245–269; it reads RIDQAQKHSKKAGTPAKGKVGGRWK.

It belongs to the troponin T family. As to expression, in fetal and adult fast skeletal muscles, with a higher level expression in fetal than in adult muscle.

Troponin T is the tropomyosin-binding subunit of troponin, the thin filament regulatory complex which confers calcium-sensitivity to striated muscle actomyosin ATPase activity. The protein is Troponin T, fast skeletal muscle (TNNT3) of Homo sapiens (Human).